Consider the following 948-residue polypeptide: UvrABC system protein A (948 aa).

Position 33 to 40 (33 to 40 (GLSGSGKS)) interacts with ATP. The C4-type zinc-finger motif lies at 252 to 279 (CPICGFSIGELEPRMFSFNSPFGACPTC). ABC transporter domains are found at residues 309-587 (WIPT…KKSL) and 607-935 (ASDR…KYLK). 639–646 (GVSGSGKS) lines the ATP pocket. A C4-type zinc finger spans residues 738–764 (CEACKGDGIIKIEMHFLPDVYVPCEVC).

Belongs to the ABC transporter superfamily. UvrA family. As to quaternary structure, forms a heterotetramer with UvrB during the search for lesions.

Its subcellular location is the cytoplasm. In terms of biological role, the UvrABC repair system catalyzes the recognition and processing of DNA lesions. UvrA is an ATPase and a DNA-binding protein. A damage recognition complex composed of 2 UvrA and 2 UvrB subunits scans DNA for abnormalities. When the presence of a lesion has been verified by UvrB, the UvrA molecules dissociate. This Staphylococcus aureus (strain MSSA476) protein is UvrABC system protein A.